Reading from the N-terminus, the 291-residue chain is Transcription antitermination protein NusB (291 aa).

It belongs to the NusB family.

Its function is as follows. Involved in transcription antitermination. Required for transcription of ribosomal RNA (rRNA) genes. Binds specifically to the boxA antiterminator sequence of the ribosomal RNA (rrn) operons. The sequence is that of Transcription antitermination protein NusB from Synechococcus sp. (strain JA-2-3B'a(2-13)) (Cyanobacteria bacterium Yellowstone B-Prime).